A 347-amino-acid polypeptide reads, in one-letter code: Haptoglobin (347 aa).

The first 18 residues, 1–18 (MRALGAVVALLLCGQLFA), serve as a signal peptide directing secretion. The region spanning 31–88 (DSCPKPPEIPKGYVEHMVRYHCQTYYKLRTAGDGVYTLDSNKQWTNKVTGEKLPECEA) is the Sushi domain. Cystine bridges form between Cys52–Cys86 and Cys90–Cys207. The 243-residue stretch at 103–345 (IMGGSLDAKG…ILDWIQTTIA (243 aa)) folds into the Peptidase S1 domain. N-linked (GlcNAc...) asparagine glycans are attached at residues Asn125, Asn151, Asn183, and Asn232. Disulfide bonds link Cys250/Cys281 and Cys292/Cys322. The interval 259-264 (VPEKKT) is interaction with CD163.

It belongs to the peptidase S1 family. In terms of assembly, tetramer of two alpha and two beta chains; disulfide-linked. The hemoglobin/haptoglobin complex is composed of a haptoglobin dimer bound to two hemoglobin alpha-beta dimers. Interacts with CD163. Interacts with ERGIC3. As to expression, expressed by the liver and secreted in plasma.

Its subcellular location is the secreted. Its function is as follows. As a result of hemolysis, hemoglobin is found to accumulate in the kidney and is secreted in the urine. Haptoglobin captures, and combines with free plasma hemoglobin to allow hepatic recycling of heme iron and to prevent kidney damage. Haptoglobin also acts as an antioxidant, has antibacterial activity and plays a role in modulating many aspects of the acute phase response. Hemoglobin/haptoglobin complexes are rapidly cleared by the macrophage CD163 scavenger receptor expressed on the surface of liver Kupfer cells through an endocytic lysosomal degradation pathway. In Sus scrofa (Pig), this protein is Haptoglobin (HP).